The primary structure comprises 251 residues: Pyrroloquinoline-quinone synthase (251 aa).

This sequence belongs to the PqqC family.

The catalysed reaction is 6-(2-amino-2-carboxyethyl)-7,8-dioxo-1,2,3,4,7,8-hexahydroquinoline-2,4-dicarboxylate + 3 O2 = pyrroloquinoline quinone + 2 H2O2 + 2 H2O + H(+). It functions in the pathway cofactor biosynthesis; pyrroloquinoline quinone biosynthesis. In terms of biological role, ring cyclization and eight-electron oxidation of 3a-(2-amino-2-carboxyethyl)-4,5-dioxo-4,5,6,7,8,9-hexahydroquinoline-7,9-dicarboxylic-acid to PQQ. The sequence is that of Pyrroloquinoline-quinone synthase from Cronobacter sakazakii (strain ATCC BAA-894) (Enterobacter sakazakii).